A 152-amino-acid polypeptide reads, in one-letter code: Cytochrome c-type biogenesis protein CcmE (152 aa).

Topologically, residues 1–9 (MRGLKKQRR) are cytoplasmic. A helical; Signal-anchor for type II membrane protein transmembrane segment spans residues 10–30 (IQILIVAAVALTLSSVLIGYA). Over 31–152 (LRDGINFFRP…PDGYARDGDS (122 aa)) the chain is Periplasmic. Heme is bound by residues histidine 123 and tyrosine 127.

It belongs to the CcmE/CycJ family.

The protein resides in the cell inner membrane. Heme chaperone required for the biogenesis of c-type cytochromes. Transiently binds heme delivered by CcmC and transfers the heme to apo-cytochromes in a process facilitated by CcmF and CcmH. The polypeptide is Cytochrome c-type biogenesis protein CcmE (Jannaschia sp. (strain CCS1)).